The sequence spans 873 residues: Alanine--tRNA ligase (873 aa).

Residues His-559, His-563, Cys-661, and His-665 each contribute to the Zn(2+) site.

The protein belongs to the class-II aminoacyl-tRNA synthetase family. Requires Zn(2+) as cofactor.

It localises to the cytoplasm. The catalysed reaction is tRNA(Ala) + L-alanine + ATP = L-alanyl-tRNA(Ala) + AMP + diphosphate. Catalyzes the attachment of alanine to tRNA(Ala) in a two-step reaction: alanine is first activated by ATP to form Ala-AMP and then transferred to the acceptor end of tRNA(Ala). Also edits incorrectly charged Ser-tRNA(Ala) and Gly-tRNA(Ala) via its editing domain. The protein is Alanine--tRNA ligase of Acaryochloris marina (strain MBIC 11017).